A 145-amino-acid chain; its full sequence is RNAP inhibitory protein (145 aa).

Residues 110–123 (HIKKLNLNSLAMLS) are C-terminal tail, binds in the RNAP DNA-binding channel.

Belongs to the viral ORF131/RIP family. In terms of assembly, interacts with host RNA polymerase (RNAP) subunits Rpo1N and Rpo2.

It is found in the virion. Plays a role in the inhibition of global transcription by interacting with the RNA polymerase (RNAP) clamp, locking it in a fixed position and inhibiting the formation and/or stability of the pre-initiation complex (PIC). Also overlaps with the transcription factor B binding site; overall RIP probably interferes with DNA loading onto RNAP but does not displace DNA once it is loaded. May play a role in virus particle assembly, possibly by dissociating active RNAP from the virus genome. This Acidianus two-tailed virus (ATV) protein is RNAP inhibitory protein.